Here is a 122-residue protein sequence, read N- to C-terminus: MIQMQTNLDVADNSGARRVMCIKVLGGAKRRYAGVGDKIVVSVKEAIPRGRVKKGDVLQAIVVRTSQGIKRKDGSVIRFDKNAAVIVNKQSEPIGTRIFGPVPRELRAKNHMKIISLAPEVL.

It belongs to the universal ribosomal protein uL14 family. In terms of assembly, part of the 50S ribosomal subunit. Forms a cluster with proteins L3 and L19. In the 70S ribosome, L14 and L19 interact and together make contacts with the 16S rRNA in bridges B5 and B8.

Binds to 23S rRNA. Forms part of two intersubunit bridges in the 70S ribosome. The sequence is that of Large ribosomal subunit protein uL14 from Phenylobacterium zucineum (strain HLK1).